The chain runs to 39 residues: Conotoxin Cl14.7 (39 aa).

Positions 1–15 (MGDLSEADSMKHQLQ) are excised as a propeptide.

Contains 2 disulfide bonds. Expressed by the venom duct.

The protein localises to the secreted. This chain is Conotoxin Cl14.7, found in Californiconus californicus (California cone).